We begin with the raw amino-acid sequence, 372 residues long: Tubby-like F-box protein 9 (372 aa).

Residues 1 to 51 are disordered; it reads MALWRCSSSWLSSVSRSSGGVGGGESKVSPEIAPVSGGEGEGEEEEGEEER. Over residues 7–18 the composition is skewed to low complexity; the sequence is SSSWLSSVSRSS. Acidic residues predominate over residues 40–49; the sequence is GEGEEEEGEE. Residues 50-105 form the F-box domain; that stretch reads ERWSRLLPELLTEIMRRVDAGAERWPPRRDVVACACVCRRWRDAAVSVVRPPLECG.

Belongs to the TUB family. In terms of tissue distribution, ubiquitous.

The sequence is that of Tubby-like F-box protein 9 (TULP9) from Oryza sativa subsp. japonica (Rice).